The following is a 461-amino-acid chain: MSARIRIRNALAGEGLGNEIMVKGWVRTIRTGKEVAFLALNDGSCFANLQVVAEPGLATFADVCAIGTGAAVAVRGRLVDSPASGQCYELHADEVAVIGLADESYPLQKKRHSFEYLRSIAHLRPRSNTFGAVFRVRSSVAQAVHRFFAERGFLYVHTPIITTSDCEGAGEMFRVTTLDPAAPPLLEGEVDFSRDFFAAQAGLTVSGQLEGELFAQAFSDIYTFGPTFRAENSNTPRHAAEFWMIEPEMAFADLMADAALAEEFFRYLCRHVLDACGEDMAFFNDHIDKGLIARVEQVANSSFAIMEYGEAIERLKKATVTFEYPVEWGLDLQTEHERYLTEQVVGGPVFVINYPKHIKAFYMRVNDDNKTVAAMDLLVPKVGEIIGGSQREERLPVLEGRMAEVGVNPEGLWWYLDSRRWGSTPHAGFGLGFERLIMYLTGMENIRDVIPFPRTPRHAEF.

Belongs to the class-II aminoacyl-tRNA synthetase family. As to quaternary structure, homodimer.

It localises to the cytoplasm. The catalysed reaction is tRNA(Asn) + L-asparagine + ATP = L-asparaginyl-tRNA(Asn) + AMP + diphosphate + H(+). The protein is Asparagine--tRNA ligase of Geobacter metallireducens (strain ATCC 53774 / DSM 7210 / GS-15).